The chain runs to 704 residues: Neutral ceramidase (704 aa).

The signal sequence occupies residues 1 to 23; that stretch reads MANSKMAFLAFLAVSFLCGLVSA. N-linked (GlcNAc...) asparagine glycosylation is present at Asn-230. Ser-276 (nucleophile) is an active-site residue. Residues Asn-362, Asn-550, and Asn-598 are each glycosylated (N-linked (GlcNAc...) asparagine).

This sequence belongs to the neutral ceramidase family. In terms of processing, N-glycosylated. Widely expressed in different tissues but enriched in neurons at all stages of development.

It localises to the secreted. The catalysed reaction is an N-acylsphing-4-enine + H2O = sphing-4-enine + a fatty acid. Hydrolyzes the sphingolipid ceramide into sphingosine and free fatty acid at an optimal pH of 6.5-7.5. Acts as a key regulator of sphingolipid signaling metabolites by generating sphingosine at the cell surface. Regulates synaptic vesicle exocytosis and trafficking by controlling presynaptic terminal sphingolipid composition. In Drosophila melanogaster (Fruit fly), this protein is Neutral ceramidase (CDase).